We begin with the raw amino-acid sequence, 479 residues long: Splicing factor ESS-2 homolog (479 aa).

M1 is subject to N-acetylmethionine. Disordered regions lie at residues 1-38 and 95-152; these read MGTP…RSRQ and GKIS…PSLD. At T3 the chain carries Phosphothreonine. Positions 7–19 are enriched in low complexity; it reads SAGALFLSSASAP. Acidic residues predominate over residues 135 to 145; the sequence is DDGEAGEEEEK. Residue K145 forms a Glycyl lysine isopeptide (Lys-Gly) (interchain with G-Cter in SUMO2) linkage. Position 295 is a phosphoserine (S295). T389 is modified (phosphothreonine). Phosphoserine is present on residues S394 and S398. The disordered stretch occupies residues 415-479; the sequence is RALRASYTPS…PARRKASDFF (65 aa). The span at 433–454 shows a compositional bias: low complexity; sequence TPAGGPQTPTSTPAPGSATRTP. The segment covering 455–466 has biased composition (polar residues); sequence LTQDPASITDNL.

This sequence belongs to the ESS2 family. As to quaternary structure, identified in the spliceosome C complex. Interacts with FRA10AC1. In the adult, widely expressed with highest expression in the testis and brain. Also widely expressed in the embryo with highest levels in the anterior pons.

The protein localises to the nucleus. May be involved in pre-mRNA splicing. The chain is Splicing factor ESS-2 homolog (Ess2) from Mus musculus (Mouse).